The sequence spans 199 residues: Ribonuclease HII (199 aa).

The RNase H type-2 domain maps to 14-199; that stretch reads GLLAGVDEAG…SFAPVAEVLR (186 aa). Positions 20, 21, and 112 each coordinate a divalent metal cation.

Belongs to the RNase HII family. Requires Mn(2+) as cofactor. The cofactor is Mg(2+).

The protein localises to the cytoplasm. It catalyses the reaction Endonucleolytic cleavage to 5'-phosphomonoester.. Functionally, endonuclease that specifically degrades the RNA of RNA-DNA hybrids. This chain is Ribonuclease HII, found in Polaromonas sp. (strain JS666 / ATCC BAA-500).